Here is a 373-residue protein sequence, read N- to C-terminus: CXADR-like membrane protein (373 aa).

Residues 1 to 18 form the signal peptide; sequence MSLLLLLLLVSYYVGTLG. Ig-like C2-type domains lie at 19–127 and 135–224; these read THTE…VILK and PKCE…VRVT. Topologically, residues 19 to 235 are extracellular; the sequence is THTEIKRVAE…QYVQSIGMVA (217 aa). 2 disulfides stabilise this stretch: Cys35–Cys111 and Cys153–Cys208. 2 N-linked (GlcNAc...) asparagine glycosylation sites follow: Asn74 and Asn197. Residues 236–256 form a helical membrane-spanning segment; it reads GAVTGIVAGALLIFLLVWLLI. The Cytoplasmic portion of the chain corresponds to 257–373; it reads RRKDKERYEE…PSQSRAFQTV (117 aa). The segment covering 264 to 281 has biased composition (basic and acidic residues); sequence YEEEERPNEIREDAEAPK. The disordered stretch occupies residues 264–373; it reads YEEEERPNEI…PSQSRAFQTV (110 aa). A compositionally biased stretch (low complexity) spans 288–314; sequence SSSSSGSRSSRSGSSSTRSTANSASRS. Residues 355 to 373 are compositionally biased toward polar residues; it reads KAETTPSMIPSQSRAFQTV.

Predominantly expressed in epithelial cells within different tissues and in the white adipose tissue. Expressed at high levels in small intestine and placenta, at intermediate levels in the heart, skeletal muscle, colon, spleen, kidney and lung and at low levels in the liver and peripheral blood leukocytes. Highly abundant in the intestine during embryo and fetal development (at protein level).

Its subcellular location is the cell junction. The protein resides in the tight junction. The protein localises to the cell membrane. Functionally, may be involved in the cell-cell adhesion. May play a role in adipocyte differentiation and development of obesity. Is required for normal small intestine development. In Homo sapiens (Human), this protein is CXADR-like membrane protein (CLMP).